The chain runs to 1135 residues: Exportin-5 (1135 aa).

Residues 32–117 (SQVFLEEIKT…KEKLVTILVD (86 aa)) form the Importin N-terminal domain. The pre-siRNA binding stretch occupies residues 630–631 (TE).

The protein belongs to the exportin family. Found in a nuclear export complex with RanGTP, exportin and pre-miRNA.

The protein localises to the nucleus. The protein resides in the cytoplasm. Functionally, mediates the nuclear export of proteins bearing a double-stranded RNA binding domain (dsRBD) and double-stranded RNAs (cargos). Mediates the nuclear export of micro-RNA precursors, which form short hairpins. This Dictyostelium discoideum (Social amoeba) protein is Exportin-5 (xpo5).